The primary structure comprises 61 residues: Small ribosomal subunit protein uS14 (61 aa).

Residues Cys-24, Cys-27, Cys-40, and Cys-43 each coordinate Zn(2+).

It belongs to the universal ribosomal protein uS14 family. Zinc-binding uS14 subfamily. As to quaternary structure, part of the 30S ribosomal subunit. Contacts proteins S3 and S10. The cofactor is Zn(2+).

Its function is as follows. Binds 16S rRNA, required for the assembly of 30S particles and may also be responsible for determining the conformation of the 16S rRNA at the A site. This Streptococcus thermophilus (strain CNRZ 1066) protein is Small ribosomal subunit protein uS14.